A 347-amino-acid polypeptide reads, in one-letter code: Large ribosomal subunit protein uL3 (347 aa).

Belongs to the universal ribosomal protein uL3 family. In terms of assembly, part of the 50S ribosomal subunit. Forms a cluster with proteins L14 and L24e.

Functionally, one of the primary rRNA binding proteins, it binds directly near the 3'-end of the 23S rRNA, where it nucleates assembly of the 50S subunit. The polypeptide is Large ribosomal subunit protein uL3 (Caldivirga maquilingensis (strain ATCC 700844 / DSM 13496 / JCM 10307 / IC-167)).